The following is a 227-amino-acid chain: uncharacterized protein (227 aa).

This is an uncharacterized protein from Ictalurid herpesvirus 1 (strain Auburn) (IcHV-1).